The primary structure comprises 445 residues: Phosphoglucosamine mutase (445 aa).

The Phosphoserine intermediate role is filled by Ser-102. Residues Ser-102, Asp-241, Asp-243, and Asp-245 each coordinate Mg(2+). At Ser-102 the chain carries Phosphoserine.

It belongs to the phosphohexose mutase family. It depends on Mg(2+) as a cofactor. Activated by phosphorylation.

It catalyses the reaction alpha-D-glucosamine 1-phosphate = D-glucosamine 6-phosphate. In terms of biological role, catalyzes the conversion of glucosamine-6-phosphate to glucosamine-1-phosphate. In Shewanella denitrificans (strain OS217 / ATCC BAA-1090 / DSM 15013), this protein is Phosphoglucosamine mutase.